Here is a 670-residue protein sequence, read N- to C-terminus: Serine/threonine-rich protein adg2 (670 aa).

The N-terminal stretch at 1–19 (MRRLTISGLLISLAKLCAG) is a signal peptide. N-linked (GlcNAc...) asparagine glycosylation is found at N77, N159, N204, N224, N274, N297, N327, N351, N370, N381, N405, N424, N435, N459, N478, N489, and N513. Residues 526–651 (GSVSSFSSSP…MSLPPSAGSS (126 aa)) are disordered.

It localises to the secreted. The protein localises to the endoplasmic reticulum. This Schizosaccharomyces pombe (strain 972 / ATCC 24843) (Fission yeast) protein is Serine/threonine-rich protein adg2 (adg2).